The chain runs to 963 residues: Bifunctional glutamine synthetase adenylyltransferase/adenylyl-removing enzyme (963 aa).

The adenylyl removase stretch occupies residues 1–451; sequence MAAPSELQLY…EHFADIIAER (451 aa). The tract at residues 461–963 is adenylyl transferase; sequence TIEWKALWAG…VAFWEKVFAE (503 aa).

It belongs to the GlnE family. Requires Mg(2+) as cofactor.

The catalysed reaction is [glutamine synthetase]-O(4)-(5'-adenylyl)-L-tyrosine + phosphate = [glutamine synthetase]-L-tyrosine + ADP. It catalyses the reaction [glutamine synthetase]-L-tyrosine + ATP = [glutamine synthetase]-O(4)-(5'-adenylyl)-L-tyrosine + diphosphate. In terms of biological role, involved in the regulation of glutamine synthetase GlnA, a key enzyme in the process to assimilate ammonia. When cellular nitrogen levels are high, the C-terminal adenylyl transferase (AT) inactivates GlnA by covalent transfer of an adenylyl group from ATP to specific tyrosine residue of GlnA, thus reducing its activity. Conversely, when nitrogen levels are low, the N-terminal adenylyl removase (AR) activates GlnA by removing the adenylyl group by phosphorolysis, increasing its activity. The regulatory region of GlnE binds the signal transduction protein PII (GlnB) which indicates the nitrogen status of the cell. The sequence is that of Bifunctional glutamine synthetase adenylyltransferase/adenylyl-removing enzyme from Hahella chejuensis (strain KCTC 2396).